The following is a 309-amino-acid chain: Ribonuclease Z (309 aa).

Zn(2+) is bound by residues H63, H65, D67, H68, H145, D216, and H274. Catalysis depends on D67, which acts as the Proton acceptor.

This sequence belongs to the RNase Z family. In terms of assembly, homodimer. It depends on Zn(2+) as a cofactor.

The catalysed reaction is Endonucleolytic cleavage of RNA, removing extra 3' nucleotides from tRNA precursor, generating 3' termini of tRNAs. A 3'-hydroxy group is left at the tRNA terminus and a 5'-phosphoryl group is left at the trailer molecule.. Functionally, zinc phosphodiesterase, which displays some tRNA 3'-processing endonuclease activity. Probably involved in tRNA maturation, by removing a 3'-trailer from precursor tRNA. This is Ribonuclease Z from Streptococcus mutans serotype c (strain ATCC 700610 / UA159).